We begin with the raw amino-acid sequence, 283 residues long: MKQYLDLCKRIVDEGEWVNNARTNKKCLTVINADLVYDVGNNQFPLVTTRKSFWKSAIAEILGYLRGYQNAADFRALGTKTWDANANENQAWLDNPNRKGPDDMGLIYGALGRAFPKPDGGHVDLLQQIVDDLSNGIDNRGEILTFYHPGAFDLGCLRPCMYEHHFSLLGDTLYLNSTQRSCDVPLGLNFNMVQVYVLLALMAQITGHKPGKAYHKIVNAHIYEDQLEPMRDVQLAREPFASPKLIINPKIKTLKDIETWVTLDDFSVEDYQHHDAIKYPFAV.

Arg-22 is a dUMP binding site. Cys-160 acts as the Nucleophile in catalysis. Residues 180-183, Asn-191, and 221-223 each bind dUMP; these read RSCD and HIY. Position 183 (Asp-183) interacts with (6R)-5,10-methylene-5,6,7,8-tetrahydrofolate. Ala-282 is a binding site for (6R)-5,10-methylene-5,6,7,8-tetrahydrofolate.

It belongs to the thymidylate synthase family. Bacterial-type ThyA subfamily. In terms of assembly, homodimer.

It localises to the cytoplasm. The catalysed reaction is dUMP + (6R)-5,10-methylene-5,6,7,8-tetrahydrofolate = 7,8-dihydrofolate + dTMP. Its pathway is pyrimidine metabolism; dTTP biosynthesis. Functionally, catalyzes the reductive methylation of 2'-deoxyuridine-5'-monophosphate (dUMP) to 2'-deoxythymidine-5'-monophosphate (dTMP) while utilizing 5,10-methylenetetrahydrofolate (mTHF) as the methyl donor and reductant in the reaction, yielding dihydrofolate (DHF) as a by-product. This enzymatic reaction provides an intracellular de novo source of dTMP, an essential precursor for DNA biosynthesis. This chain is Thymidylate synthase, found in Shewanella frigidimarina (strain NCIMB 400).